The primary structure comprises 553 residues: Dihydroxy-acid dehydratase (553 aa).

Asp78 lines the Mg(2+) pocket. Cys119 contributes to the [2Fe-2S] cluster binding site. Residues Asp120 and Lys121 each coordinate Mg(2+). At Lys121 the chain carries N6-carboxylysine. Cys193 contributes to the [2Fe-2S] cluster binding site. Glu441 is a Mg(2+) binding site. The active-site Proton acceptor is Ser467.

The protein belongs to the IlvD/Edd family. In terms of assembly, homodimer. [2Fe-2S] cluster is required as a cofactor. Requires Mg(2+) as cofactor.

It catalyses the reaction (2R)-2,3-dihydroxy-3-methylbutanoate = 3-methyl-2-oxobutanoate + H2O. The enzyme catalyses (2R,3R)-2,3-dihydroxy-3-methylpentanoate = (S)-3-methyl-2-oxopentanoate + H2O. It functions in the pathway amino-acid biosynthesis; L-isoleucine biosynthesis; L-isoleucine from 2-oxobutanoate: step 3/4. Its pathway is amino-acid biosynthesis; L-valine biosynthesis; L-valine from pyruvate: step 3/4. Its function is as follows. Functions in the biosynthesis of branched-chain amino acids. Catalyzes the dehydration of (2R,3R)-2,3-dihydroxy-3-methylpentanoate (2,3-dihydroxy-3-methylvalerate) into 2-oxo-3-methylpentanoate (2-oxo-3-methylvalerate) and of (2R)-2,3-dihydroxy-3-methylbutanoate (2,3-dihydroxyisovalerate) into 2-oxo-3-methylbutanoate (2-oxoisovalerate), the penultimate precursor to L-isoleucine and L-valine, respectively. The sequence is that of Dihydroxy-acid dehydratase from Geobacter sp. (strain M21).